We begin with the raw amino-acid sequence, 243 residues long: Type III pantothenate kinase (243 aa).

6-13 lines the ATP pocket; sequence DGGNTFIK. Residues tyrosine 87 and 94–97 each bind substrate; that span reads GKDR. Aspartate 96 acts as the Proton acceptor in catalysis. Aspartate 117 is a K(+) binding site. Threonine 120 contributes to the ATP binding site. Threonine 172 lines the substrate pocket.

The protein belongs to the type III pantothenate kinase family. In terms of assembly, homodimer. It depends on NH4(+) as a cofactor. K(+) is required as a cofactor.

The protein localises to the cytoplasm. The catalysed reaction is (R)-pantothenate + ATP = (R)-4'-phosphopantothenate + ADP + H(+). It participates in cofactor biosynthesis; coenzyme A biosynthesis; CoA from (R)-pantothenate: step 1/5. Functionally, catalyzes the phosphorylation of pantothenate (Pan), the first step in CoA biosynthesis. This chain is Type III pantothenate kinase, found in Christiangramia forsetii (strain DSM 17595 / CGMCC 1.15422 / KT0803) (Gramella forsetii).